The sequence spans 356 residues: Thrombopoietin (356 aa).

A signal peptide spans 1 to 21 (MELTDLLLAAMLLAVARLTLS). 2 cysteine pairs are disulfide-bonded: Cys28–Cys172 and Cys50–Cys106. Asn197, Asn206, Asn235, Asn249, Asn256, Asn336, and Asn351 each carry an N-linked (GlcNAc...) asparagine glycan. Residues 291-356 (GGLPPSPSLA…PHPRNLSQET (66 aa)) are disordered. The span at 330-339 (PSTTMPNSTA) shows a compositional bias: polar residues.

It belongs to the EPO/TPO family. In terms of tissue distribution, found mainly in the liver, kidney and skeletal muscle.

The protein resides in the secreted. Lineage-specific cytokine affecting the proliferation and maturation of megakaryocytes from their committed progenitor cells. It acts at a late stage of megakaryocyte development. It may be the major physiological regulator of circulating platelets. The polypeptide is Thrombopoietin (Thpo) (Mus musculus (Mouse)).